We begin with the raw amino-acid sequence, 87 residues long: MVNMKASMFLTSAGLVLLFVVCYASESEEKEFPKEMLSSIFAVDNDFKQEERDCAGHMRECKEKLCCSGYVCSSRWKWCVLPAPWRR.

The N-terminal stretch at 1 to 24 (MVNMKASMFLTSAGLVLLFVVCYA) is a signal peptide. Residues 25-52 (SESEEKEFPKEMLSSIFAVDNDFKQEER) constitute a propeptide that is removed on maturation. 3 disulfides stabilise this stretch: Cys-54–Cys-67, Cys-61–Cys-72, and Cys-66–Cys-79.

It belongs to the neurotoxin 10 (Hwtx-1) family. 51 (Hntx-8) subfamily. Hntx-8 sub-subfamily. As to expression, expressed by the venom gland.

The protein resides in the secreted. Its function is as follows. Ion channel inhibitor. The polypeptide is U3-theraphotoxin-Hhn1f (Cyriopagopus hainanus (Chinese bird spider)).